The primary structure comprises 615 residues: Nuclear cap-binding protein subunit 3 (615 aa).

K12 is covalently cross-linked (Glycyl lysine isopeptide (Lys-Gly) (interchain with G-Cter in SUMO2)). Positions 15-27 (APAGPALGLPSPE) are enriched in low complexity. A disordered region spans residues 15 to 43 (APAGPALGLPSPEVESGLERGEPEPMEVE). A Phosphoserine modification is found at S25. A Glycyl lysine isopeptide (Lys-Gly) (interchain with G-Cter in SUMO2) cross-link involves residue K70. S73 is modified (phosphoserine). The RNA recognition motif (RRM) domain stretch occupies residues 126-187 (ETIYICGVDE…MSSLPAQDKM (62 aa)). The short motif at 155-158 (WLDD) is the WLDD motif; essential for 7-methylguanosine-containing mRNA cap binding element. 2 disordered regions span residues 182–233 (PAQD…LDTL) and 332–400 (HSGL…MDYD). Residues 185–208 (DKMRSRDASEDKSSEKNKKDKQED) are compositionally biased toward basic and acidic residues. A Glycyl lysine isopeptide (Lys-Gly) (interchain with G-Cter in SUMO2) cross-link involves residue K186. S209 and S210 each carry phosphoserine. Acidic residues-rich tracts occupy residues 209–230 (SSDD…DVEL) and 341–360 (EPIE…DMDA). Positions 361-383 (DDRVVVEYHEELPGLKQPRERSL) are enriched in basic and acidic residues. The residue at position 408 (T408) is a Phosphothreonine. Residue S410 is modified to Phosphoserine. Disordered regions lie at residues 430 to 454 (SIRN…NKLP) and 467 to 615 (EKRQ…EAES). Over residues 506–516 (VRREPSSDVHS) the composition is skewed to basic and acidic residues. K536 participates in a covalent cross-link: Glycyl lysine isopeptide (Lys-Gly) (interchain with G-Cter in SUMO2). 2 stretches are compositionally biased toward basic and acidic residues: residues 549–564 (KTKE…RASG) and 580–593 (IKEK…KSRL). S563 carries the post-translational modification Phosphoserine. Residues 606-615 (ESSSGSEAES) show a composition bias toward low complexity. Phosphoserine is present on S615.

Belongs to the NCBP3 family. Component of an alternative cap-binding complex (CBC) composed of NCBP1/CBP80 and NCBP3. Interacts with SRRT, KPNA3, THOC5 and EIF4A3.

It is found in the nucleus. The protein localises to the cytoplasm. Functionally, associates with NCBP1/CBP80 to form an alternative cap-binding complex (CBC) which plays a key role in mRNA export. NCBP3 serves as adapter protein linking the capped RNAs (m7GpppG-capped RNA) to NCBP1/CBP80. Unlike the conventional CBC with NCBP2 which binds both small nuclear RNA (snRNA) and messenger (mRNA) and is involved in their export from the nucleus, the alternative CBC with NCBP3 does not bind snRNA and associates only with mRNA thereby playing a role in only mRNA export. The alternative CBC is particularly important in cellular stress situations such as virus infections and the NCBP3 activity is critical to inhibit virus growth. This is Nuclear cap-binding protein subunit 3 from Mus musculus (Mouse).